The sequence spans 568 residues: Tyrosine-protein kinase transforming protein Src (568 aa).

Positions 1–58 are disordered; that stretch reads MGSSKSKPKDPSQRRRSLEPPDSTHHGGFPASQTPNKTAAPDTHRTPSRSFGTVATEP. Residue Gly-2 is the site of N-myristoyl glycine; by host attachment. Basic and acidic residues predominate over residues 7 to 25; that stretch reads KPKDPSQRRRSLEPPDSTH. One can recognise an SH3 domain in the interval 81-142; it reads GGVTTFVALY…PSNYVAPSDS (62 aa). Residues 148–245 form the SH2 domain; the sequence is WYFGKITRRE…GLCHRLTNVC (98 aa). Positions 267 to 520 constitute a Protein kinase domain; the sequence is LRLEVKLGQG…YLQAFLEDYF (254 aa). ATP is bound by residues 273–281 and Lys-295; that span reads LGQGCFGEV. The active-site Proton acceptor is Asp-386. Tyr-416 is modified (phosphotyrosine; by autocatalysis).

Belongs to the protein kinase superfamily. Tyr protein kinase family. SRC subfamily. In terms of processing, the phosphorylated form is termed pp60v-src.

It carries out the reaction L-tyrosyl-[protein] + ATP = O-phospho-L-tyrosyl-[protein] + ADP + H(+). This phosphoprotein, required for both the initiation and the maintenance of neoplastic transformation, is a protein kinase that catalyzes the phosphorylation of tyrosine residues in vitro. The protein is Tyrosine-protein kinase transforming protein Src (V-SRC) of Galliformes.